Consider the following 264-residue polypeptide: Acyl-[acyl-carrier-protein]--UDP-N-acetylglucosamine O-acyltransferase (264 aa).

The protein belongs to the transferase hexapeptide repeat family. LpxA subfamily. In terms of assembly, homotrimer.

Its subcellular location is the cytoplasm. It catalyses the reaction a (3R)-hydroxyacyl-[ACP] + UDP-N-acetyl-alpha-D-glucosamine = a UDP-3-O-[(3R)-3-hydroxyacyl]-N-acetyl-alpha-D-glucosamine + holo-[ACP]. Its pathway is glycolipid biosynthesis; lipid IV(A) biosynthesis; lipid IV(A) from (3R)-3-hydroxytetradecanoyl-[acyl-carrier-protein] and UDP-N-acetyl-alpha-D-glucosamine: step 1/6. Involved in the biosynthesis of lipid A, a phosphorylated glycolipid that anchors the lipopolysaccharide to the outer membrane of the cell. In Chlorobaculum tepidum (strain ATCC 49652 / DSM 12025 / NBRC 103806 / TLS) (Chlorobium tepidum), this protein is Acyl-[acyl-carrier-protein]--UDP-N-acetylglucosamine O-acyltransferase.